Here is a 313-residue protein sequence, read N- to C-terminus: Protoheme IX farnesyltransferase (313 aa).

The next 8 helical transmembrane spans lie at valine 32–histidine 52, proline 53–leucine 73, isoleucine 120–isoleucine 140, isoleucine 153–glycine 173, leucine 180–phenylalanine 200, isoleucine 226–phenylalanine 246, alanine 248–valine 268, and leucine 284–valine 304.

This sequence belongs to the UbiA prenyltransferase family. Protoheme IX farnesyltransferase subfamily.

It is found in the cell inner membrane. It carries out the reaction heme b + (2E,6E)-farnesyl diphosphate + H2O = Fe(II)-heme o + diphosphate. Its pathway is porphyrin-containing compound metabolism; heme O biosynthesis; heme O from protoheme: step 1/1. Converts heme B (protoheme IX) to heme O by substitution of the vinyl group on carbon 2 of heme B porphyrin ring with a hydroxyethyl farnesyl side group. This is Protoheme IX farnesyltransferase from Rhodopseudomonas palustris (strain HaA2).